The sequence spans 614 residues: DBH-like monooxygenase protein 1 (614 aa).

A signal peptide spans 1–22; the sequence is MRPLRPWALLLGALLGAAAAAA. Residues 23–592 lie on the Lumenal side of the membrane; the sequence is RRYPHVAVLD…SSSCLPCSLS (570 aa). The region spanning 35–148 is the DOMON domain; the sequence is AAYRLLWGRR…STVRVIWAYH (114 aa). Asn-114 carries an N-linked (GlcNAc...) asparagine glycan. Residue Tyr-203 is part of the active site. 2 disulfide bridges follow: Cys-205–Cys-257 and Cys-242–Cys-269. Cu cation contacts are provided by His-235 and His-236. Residue Asn-247 is glycosylated (N-linked (GlcNAc...) asparagine). Residues His-307, His-389, His-391, and Met-464 each coordinate Cu cation. 3 disulfide bridges follow: Cys-364/Cys-480, Cys-368/Cys-550, and Cys-443/Cys-465. His-389 is an active-site residue. N-linked (GlcNAc...) asparagine glycosylation is found at Asn-476 and Asn-517. The chain crosses the membrane as a helical span at residues 593 to 613; sequence LTLLFVVYVASSTIGNFGPVV.

This sequence belongs to the copper type II ascorbate-dependent monooxygenase family. Cu(2+) is required as a cofactor.

It is found in the endoplasmic reticulum membrane. The polypeptide is DBH-like monooxygenase protein 1 (MOXD1) (Gallus gallus (Chicken)).